The primary structure comprises 549 residues: Indole-3-acetic acid-amido synthetase GH3.2 (549 aa).

The protein belongs to the IAA-amido conjugating enzyme family. Expressed in flowers, pollen, cotyledons, stipules, true leaves, hypocotyls, and all parts of the roots except for the primary root tips.

Its function is as follows. Catalyzes the synthesis of indole-3-acetic acid (IAA)-amino acid conjugates, providing a mechanism for the plant to cope with the presence of excess auxin. Strongly reactive with Glu, Gln, Trp, Asp, Ala, Leu, Phe, Gly, Tyr, Met, Ile and Val. Little or no product formation with His, Ser, Thr, Arg, Lys, or Cys. Also active on pyruvic and butyric acid analogs of IAA, PAA and the synthetic auxin naphthaleneacetic acid (NAA). The two chlorinated synthetic auxin herbicides 2,4-D and 3,6-dichloro-o-anisic acid (dicamba) cannot be used as substrates. In Arabidopsis thaliana (Mouse-ear cress), this protein is Indole-3-acetic acid-amido synthetase GH3.2 (GH3.2).